A 527-amino-acid polypeptide reads, in one-letter code: Light-independent protochlorophyllide reductase subunit B (527 aa).

Asp-36 provides a ligand contact to [4Fe-4S] cluster. The Proton donor role is filled by Asp-292. Position 428 to 429 (428 to 429 (GL)) interacts with substrate.

This sequence belongs to the ChlB/BchB/BchZ family. In terms of assembly, protochlorophyllide reductase is composed of three subunits; BchL, BchN and BchB. Forms a heterotetramer of two BchB and two BchN subunits. [4Fe-4S] cluster serves as cofactor.

The enzyme catalyses chlorophyllide a + oxidized 2[4Fe-4S]-[ferredoxin] + 2 ADP + 2 phosphate = protochlorophyllide a + reduced 2[4Fe-4S]-[ferredoxin] + 2 ATP + 2 H2O. The protein operates within porphyrin-containing compound metabolism; bacteriochlorophyll biosynthesis (light-independent). In terms of biological role, component of the dark-operative protochlorophyllide reductase (DPOR) that uses Mg-ATP and reduced ferredoxin to reduce ring D of protochlorophyllide (Pchlide) to form chlorophyllide a (Chlide). This reaction is light-independent. The NB-protein (BchN-BchB) is the catalytic component of the complex. The chain is Light-independent protochlorophyllide reductase subunit B from Chlorobium phaeovibrioides (strain DSM 265 / 1930) (Prosthecochloris vibrioformis (strain DSM 265)).